The primary structure comprises 2322 residues: Protein sidekick homolog (2322 aa).

The signal sequence occupies residues 1–26; sequence MNYRIFLLFCTTTVLWSVVSTQLVLG. Residues 27 to 2020 lie on the Extracellular side of the membrane; it reads KPPIFQNTGP…IPDDPFYTTW (1994 aa). Ig-like C2-type domains lie at 28 to 105, 217 to 319, and 324 to 397; these read PPIF…AAIS, PSLQ…AYLT, and PVLK…ADMS. 3 disulfides stabilise this stretch: Cys52/Cys94, Cys247/Cys301, and Cys345/Cys386. A glycan (N-linked (GlcNAc...) asparagine) is linked at Asn408. Ig-like C2-type domains are found at residues 450–545 and 548–639; these read PFTS…VQVN and SLIE…AMLQ. Intrachain disulfides connect Cys481–Cys529 and Cys569–Cys623. Asn633 and Asn656 each carry an N-linked (GlcNAc...) asparagine glycan. 13 Fibronectin type-III domains span residues 646-752, 757-854, 859-958, 962-1056, 1060-1155, 1160-1255, 1260-1360, 1364-1458, 1464-1567, 1572-1672, 1674-1774, 1777-1873, and 1908-2010; these read MPER…MPQQ, APRN…TAEG, APKN…TEED, AVDE…VPPE, RPSM…TLQT, PSQR…TYES, SPRN…TLED, PPES…SSVR, APAP…TLPS, QPIS…VGYS, PKRN…LEDK, PVGV…SKDG, and QAKR…VPES. The disordered stretch occupies residues 732–762; it reads SNKHGPGKPSLPSSSVTMPQQPPSAAPRNVA. 4 N-linked (GlcNAc...) asparagine glycosylation sites follow: Asn808, Asn869, Asn933, and Asn1017. Basic and acidic residues predominate over residues 1040–1049; it reads GDGPVEETKF. The interval 1040–1060 is disordered; that stretch reads GDGPVEETKFESGVPPELPGR. Residue Asn1108 is glycosylated (N-linked (GlcNAc...) asparagine). A disordered region spans residues 1139 to 1163; that stretch reads GRGAPSEPSRTFETLQTNPETPSQR. Residues 1146–1163 are compositionally biased toward polar residues; it reads PSRTFETLQTNPETPSQR. 3 N-linked (GlcNAc...) asparagine glycosylation sites follow: Asn1615, Asn1677, and Asn1864. The disordered stretch occupies residues 1916 to 1965; it reads EETENGYVSQRPRRNEIRGAKSAAQTSASSNSNRPTHPIGEWITLRPTDG. The segment covering 1935–1947 has biased composition (low complexity); that stretch reads AKSAAQTSASSNS. Residues 2021 to 2041 form a helical membrane-spanning segment; the sequence is WFMALVAMAAFVLIVIIIAIL. Residues 2042 to 2322 lie on the Cytoplasmic side of the membrane; that stretch reads CVTGSSAKYR…NLTAGFSSFV (281 aa). 3 disordered regions span residues 2081 to 2114, 2167 to 2254, and 2276 to 2322; these read NMTR…SVLG, YVVS…ADDI, and MVRA…SSFV. The span at 2092–2101 shows a compositional bias: polar residues; it reads PGTTQSWLSD. Residues 2207 to 2223 are compositionally biased toward low complexity; that stretch reads PSSSGGSQPQGSPQQQQ. Acidic residues predominate over residues 2227–2238; the sequence is DSFDEEDDVDDD. 2 stretches are compositionally biased toward polar residues: residues 2282-2302 and 2310-2322; these read LTNQ…STSE and ATPN…SSFV.

This sequence belongs to the sidekick family.

The protein localises to the membrane. Cell adhesion protein. The chain is Protein sidekick homolog (rig-4) from Caenorhabditis briggsae.